Here is a 154-residue protein sequence, read N- to C-terminus: MAPDVPLRQLDLSLQFGQFPGVARHRAALPRRRVQRWISHALKTDAEITVRIVDAEEGQSLNRDYRRKDYATNVLTFDYTREPVVTADLVLCAPVVEREAREQGKTLEAHYAHLLVHATLHAQGYDHETNERDALEMEALEILLLASLRFANPY.

Zn(2+)-binding residues include His-117, His-121, and His-127.

It belongs to the endoribonuclease YbeY family. Zn(2+) serves as cofactor.

The protein resides in the cytoplasm. Single strand-specific metallo-endoribonuclease involved in late-stage 70S ribosome quality control and in maturation of the 3' terminus of the 16S rRNA. The sequence is that of Endoribonuclease YbeY from Polaromonas sp. (strain JS666 / ATCC BAA-500).